Consider the following 51-residue polypeptide: MARYRCCRSQSRSRCCRRRRRCRRRRRQRCRARRTAMRCCRRRYRRRCRRY.

This sequence belongs to the protamine P1 family. As to expression, testis.

It is found in the nucleus. Its subcellular location is the chromosome. In terms of biological role, protamines substitute for histones in the chromatin of sperm during the haploid phase of spermatogenesis. They compact sperm DNA into a highly condensed, stable and inactive complex. The sequence is that of Sperm protamine P1 (PRM1) from Piliocolobus badius (Western red colobus).